The following is a 215-amino-acid chain: Probable phosphoglycerate mutase GpmB (215 aa).

Substrate contacts are provided by residues 8 to 15, 21 to 22, arginine 58, arginine 60, 82 to 85, 104 to 105, and 151 to 152; these read RHGETQWN, QG, ELNM, RR, and GI. Histidine 9 (tele-phosphohistidine intermediate) is an active-site residue. The Proton donor/acceptor role is filled by glutamate 82.

Belongs to the phosphoglycerate mutase family. GpmB subfamily.

The catalysed reaction is (2R)-2-phosphoglycerate = (2R)-3-phosphoglycerate. Its pathway is carbohydrate degradation; glycolysis; pyruvate from D-glyceraldehyde 3-phosphate: step 3/5. This is Probable phosphoglycerate mutase GpmB from Escherichia coli O9:H4 (strain HS).